The following is a 48-amino-acid chain: ATP synthase protein 8 (48 aa).

A helical membrane pass occupies residues 13–32; it reads VVFTLISLSFIFFVFSKYIL.

The protein belongs to the ATPase protein 8 family. In terms of assembly, F-type ATPases have 2 components, CF(1) - the catalytic core - and CF(0) - the membrane proton channel.

The protein localises to the mitochondrion membrane. In terms of biological role, mitochondrial membrane ATP synthase (F(1)F(0) ATP synthase or Complex V) produces ATP from ADP in the presence of a proton gradient across the membrane which is generated by electron transport complexes of the respiratory chain. F-type ATPases consist of two structural domains, F(1) - containing the extramembraneous catalytic core and F(0) - containing the membrane proton channel, linked together by a central stalk and a peripheral stalk. During catalysis, ATP synthesis in the catalytic domain of F(1) is coupled via a rotary mechanism of the central stalk subunits to proton translocation. Part of the complex F(0) domain. Minor subunit located with subunit a in the membrane. The chain is ATP synthase protein 8 (ATP8) from Trichophyton rubrum (Athlete's foot fungus).